We begin with the raw amino-acid sequence, 246 residues long: MPIQPSGKETEEMEAEGDSAAEMNGEADESEEERSGSQTESEEESSEMDDEDYERRRSECVSEMLDLEKQFSELKEKLFRERLSQLRLRLEEVGAERAPEYTEPLGGLQQSLKIRIQVAGIYKGFCLDVIRNKYECELQGAKQHLESEKLLLYDTLLGELQERIQRLEEDRQSLDISSEWWDDKLHSRGSSKTWDSVPPSKRKKAPLVSGPYIVYMLQEIDILEDWTAIKKARAAVSPQKRKADGP.

A disordered region spans residues 1 to 57 (MPIQPSGKETEEMEAEGDSAAEMNGEADESEEERSGSQTESEEESSEMDDEDYERRR). 2 stretches are compositionally biased toward acidic residues: residues 11 to 32 (EEME…ESEE) and 40 to 52 (ESEE…DDED). A coiled-coil region spans residues 51-98 (EDYERRRSECVSEMLDLEKQFSELKEKLFRERLSQLRLRLEEVGAERA). Residues lysine 184 and lysine 242 each participate in a glycyl lysine isopeptide (Lys-Gly) (interchain with G-Cter in SUMO2) cross-link.

The protein belongs to the BRMS1 family. As to quaternary structure, homohexamer (Potential). Interacts with SNX6, HDAC1 and RELA. Interacts with ARID4A. Identified in mSin3A corepressor complexes together with SIN3A, SIN3B, RBBP4, RBBP7, SAP30, SUDS3, ARID4A, HDAC1 and HDAC2. Interacts with SPOP; this recruits the protein to a ubiquitin ligase complex containing SPOP and CUL3. Post-translationally, ubiquitinated by a cullin-RING-based BCR (BTB-CUL3-RBX1) E3 ubiquitin-protein ligase complex containing SPOP, leading to proteasomal degradation.

It is found in the nucleus. Its subcellular location is the cytoplasm. Its function is as follows. Transcriptional repressor. Down-regulates transcription activation by NF-kappa-B by promoting the deacetylation of RELA at 'Lys-310'. Promotes HDAC1 binding to promoter regions. Down-regulates expression of anti-apoptotic genes that are controlled by NF-kappa-B. Promotes apoptosis in cells that have inadequate adherence to a substrate, a process called anoikis, and may thereby inhibit metastasis. This is Breast cancer metastasis-suppressor 1 homolog (Brms1) from Rattus norvegicus (Rat).